Here is a 95-residue protein sequence, read N- to C-terminus: Large ribosomal subunit protein uL23 (95 aa).

Belongs to the universal ribosomal protein uL23 family. As to quaternary structure, part of the 50S ribosomal subunit. Contacts protein L29, and trigger factor when it is bound to the ribosome.

One of the early assembly proteins it binds 23S rRNA. One of the proteins that surrounds the polypeptide exit tunnel on the outside of the ribosome. Forms the main docking site for trigger factor binding to the ribosome. This Rubrobacter xylanophilus (strain DSM 9941 / JCM 11954 / NBRC 16129 / PRD-1) protein is Large ribosomal subunit protein uL23.